We begin with the raw amino-acid sequence, 63 residues long: Large ribosomal subunit protein uL30 (63 aa).

This sequence belongs to the universal ribosomal protein uL30 family. As to quaternary structure, part of the 50S ribosomal subunit.

The polypeptide is Large ribosomal subunit protein uL30 (Caulobacter sp. (strain K31)).